The sequence spans 1064 residues: Fibropellin-1 (1064 aa).

Residues 1–19 form the signal peptide; that stretch reads MRTWLLAVLLLSVIAVTYG. The EGF-like 1 domain maps to 20–55; it reads QGECDSDPCENGSTCQEGEGSYICQCPMGYDGQNCD. Cystine bridges form between Cys-23–Cys-34, Cys-28–Cys-43, Cys-45–Cys-54, and Cys-62–Cys-88. Asn-30 carries N-linked (GlcNAc...) asparagine glycosylation. Positions 62-175 constitute a CUB domain; the sequence is CGYNVFDANG…NRGFRITFSS (114 aa). The N-linked (GlcNAc...) asparagine glycan is linked to Asn-136. The EGF-like 2; calcium-binding domain occupies 176–212; that stretch reads DGDDCDPNLCQNGAACTDLVNDYACTCPPGFTGRNCE. 61 disulfide bridges follow: Cys-180–Cys-191, Cys-185–Cys-200, Cys-202–Cys-211, Cys-218–Cys-229, Cys-223–Cys-238, Cys-240–Cys-249, Cys-256–Cys-267, Cys-261–Cys-276, Cys-278–Cys-287, Cys-294–Cys-305, Cys-299–Cys-314, Cys-316–Cys-325, Cys-332–Cys-343, Cys-337–Cys-352, Cys-354–Cys-363, Cys-370–Cys-381, Cys-375–Cys-390, Cys-392–Cys-401, Cys-408–Cys-419, Cys-413–Cys-428, Cys-430–Cys-439, Cys-446–Cys-457, Cys-451–Cys-466, Cys-468–Cys-477, Cys-484–Cys-495, Cys-489–Cys-504, Cys-506–Cys-515, Cys-522–Cys-533, Cys-527–Cys-542, Cys-544–Cys-553, Cys-560–Cys-571, Cys-565–Cys-580, Cys-582–Cys-591, Cys-598–Cys-609, Cys-603–Cys-618, Cys-620–Cys-629, Cys-636–Cys-647, Cys-641–Cys-656, Cys-658–Cys-667, Cys-674–Cys-685, Cys-679–Cys-694, Cys-696–Cys-705, Cys-712–Cys-723, Cys-717–Cys-732, Cys-734–Cys-743, Cys-750–Cys-761, Cys-755–Cys-770, Cys-772–Cys-781, Cys-788–Cys-799, Cys-793–Cys-808, Cys-810–Cys-819, Cys-826–Cys-837, Cys-831–Cys-846, Cys-848–Cys-857, Cys-864–Cys-875, Cys-869–Cys-884, Cys-886–Cys-895, Cys-902–Cys-913, Cys-907–Cys-922, Cys-924–Cys-933, and Cys-939–Cys-1015. Residues 214 to 250 enclose the EGF-like 3; calcium-binding domain; that stretch reads DIDECASDPCQNGGACVDGVNGYVCNCVPGFDGDECE. Residues 252-288 enclose the EGF-like 4; calcium-binding domain; sequence NINECASSPCLNGGICVDGVNMFECTCLAGFTGVRCE. Residues 290 to 326 enclose the EGF-like 5; calcium-binding domain; the sequence is NIDECASAPCQNGGICIDGINGYTCSCPLGFSGDNCE. Positions 328–364 constitute an EGF-like 6; calcium-binding domain; the sequence is NDDECSSIPCLNGGTCVDLVNAYMCVCAPGWTGPTCA. Residues 366–402 enclose the EGF-like 7; calcium-binding domain; that stretch reads NIDECASAPCQNGGVCIDGVNGYMCDCQPGYTGTHCE. Positions 404–440 constitute an EGF-like 8; calcium-binding domain; it reads DIDECARPPCQNGGDCVDGVNGYVCICAPGFDGLNCE. An EGF-like 9; calcium-binding domain is found at 442-478; it reads NIDECASRPCQNGAVCVDGVNGFVCTCSAGYTGVLCE. The EGF-like 10; calcium-binding domain occupies 480 to 516; sequence DINECASMPCLNGGVCTDLVNGYICTCAAGFEGTNCE. The region spanning 518-554 is the EGF-like 11; calcium-binding domain; the sequence is DTDECASFPCQNGATCTDQVNGYVCTCVPGYTGVLCE. The 37-residue stretch at 556-592 folds into the EGF-like 12; calcium-binding domain; it reads DINECASFPCLNGGTCNDQVNGYVCVCAQDTSVSTCE. Residues 594–630 enclose the EGF-like 13; calcium-binding domain; that stretch reads DRDECASAPCLNGGACMDVVNGFVCTCLPGWEGTNCE. Residues 632-668 enclose the EGF-like 14; calcium-binding domain; that stretch reads NTDECASSPCMNGGLCVDQVNSYVCFCLPGFTGIHCG. Residues 670–706 enclose the EGF-like 15; calcium-binding domain; sequence EIDECASSPCLNGGQCIDRVDSYECVCAAGYTAVRCQ. One can recognise an EGF-like 16; calcium-binding domain in the interval 708–744; sequence NIDECASAPCQNGGVCVDGVNGYVCNCAPGYTGDNCE. The region spanning 746–782 is the EGF-like 17; calcium-binding domain; it reads EIDECASMPCLNGGACIEMVNGYTCQCVAGYTGVICE. The EGF-like 18; calcium-binding domain occupies 784–820; it reads DIDECASAPCQNGGVCTDTINGYICACVPGFTGSNCE. In terms of domain architecture, EGF-like 19; calcium-binding spans 822 to 858; it reads NIDECASDPCLNGGICVDGVNGFVCQCPPNYSGTYCE. N-linked (GlcNAc...) asparagine glycosylation is present at Asn-851. The EGF-like 20 domain maps to 860-896; the sequence is SLDACRSMPCQNGATCVNVGADYVCECVPGYAGQNCE. The EGF-like 21; calcium-binding domain maps to 898–934; it reads DINECASLPCQNGGLCIDGIAGYTCQCRLGYIGVNCE. The 120-residue stretch at 937 to 1056 folds into the Avidin-like domain; it reads GFCDLEGMWY…GQDKWTRYEQ (120 aa).

In terms of assembly, homotetramer.

It is found in the secreted. Its subcellular location is the extracellular space. The protein localises to the cytoplasmic vesicle. It localises to the extracellular matrix. The protein resides in the hyaline layer. It is found in the apical lamina. In terms of biological role, forms the apical lamina, a component of the extracellular matrix. In Strongylocentrotus purpuratus (Purple sea urchin), this protein is Fibropellin-1 (EGF1).